Here is a 152-residue protein sequence, read N- to C-terminus: Calmodulin-like protein 2 (152 aa).

EF-hand domains are found at residues 1 to 36 (MDRG…VGIM), 37 to 72 (VPEN…MVEE), 74 to 109 (EEEE…MGLK), and 112 to 147 (RTLE…GGFA). Ca(2+) contacts are provided by D14, N16, D18, K20, E25, D50, N52, D54, E61, D87, N89, D91, E98, D125, D127, D129, M131, and E136.

It belongs to the calmodulin family.

Functionally, potential calcium sensor that is required for pollen tube attraction for ovule fertilization. In Arabidopsis thaliana (Mouse-ear cress), this protein is Calmodulin-like protein 2 (CML2).